The following is a 273-amino-acid chain: WIMGHMVNAIAQIDEFVNLGANSIETDVSFDKNANPEYTYHGIPCDCGRTCTKSEKFNDFLQGLQKATTPGDSKYQEKLVLVVFDLKSSSLYDNQASDAGKKLAKSLLQNYWKNGNNGGRAYIVLSIPNLAHYKLITGFKETLKTEGHPELMEKVGYDFSGNDDIDQVAKAYKKAGVTGHVWQSDGITNCLPRGLDRVKQAVANRDSSNGFINKVYYWTVDKRSTTRGALDAGVDGVMTNYPDVIADVLSESAYKSKFRIATYEDNPWETFKN.

Residue histidine 5 is part of the active site. Mg(2+) contacts are provided by glutamate 25 and aspartate 27. The active-site Nucleophile is the histidine 41. 2 disulfides stabilise this stretch: cysteine 45–cysteine 51 and cysteine 47–cysteine 190. A Mg(2+)-binding site is contributed by aspartate 85.

This sequence belongs to the arthropod phospholipase D family. Class II subfamily. The cofactor is Mg(2+). As to expression, expressed by the venom gland.

It localises to the secreted. The enzyme catalyses an N-(acyl)-sphingosylphosphocholine = an N-(acyl)-sphingosyl-1,3-cyclic phosphate + choline. The catalysed reaction is an N-(acyl)-sphingosylphosphoethanolamine = an N-(acyl)-sphingosyl-1,3-cyclic phosphate + ethanolamine. It catalyses the reaction a 1-acyl-sn-glycero-3-phosphocholine = a 1-acyl-sn-glycero-2,3-cyclic phosphate + choline. It carries out the reaction a 1-acyl-sn-glycero-3-phosphoethanolamine = a 1-acyl-sn-glycero-2,3-cyclic phosphate + ethanolamine. Its function is as follows. Dermonecrotic toxins cleave the phosphodiester linkage between the phosphate and headgroup of certain phospholipids (sphingolipid and lysolipid substrates), forming an alcohol (often choline) and a cyclic phosphate. This toxin acts on sphingomyelin (SM). It may also act on ceramide phosphoethanolamine (CPE), lysophosphatidylcholine (LPC) and lysophosphatidylethanolamine (LPE), but not on lysophosphatidylserine (LPS), and lysophosphatidylglycerol (LPG). It acts by transphosphatidylation, releasing exclusively cyclic phosphate products as second products. Induces dermonecrosis, hemolysis, increased vascular permeability, edema, inflammatory response, and platelet aggregation. This is Dermonecrotic toxin LdSicTox-alphaIB3b from Loxosceles deserta (Desert recluse spider).